The sequence spans 286 residues: Pyridoxal kinase PdxY (286 aa).

Substrate is bound by residues Ser-9 and 44–45; that span reads TQ. ATP-binding residues include Asp-111, Glu-148, and Lys-181. Asp-222 is a binding site for substrate.

This sequence belongs to the pyridoxine kinase family. PdxY subfamily. In terms of assembly, homodimer. Mg(2+) serves as cofactor.

The enzyme catalyses pyridoxal + ATP = pyridoxal 5'-phosphate + ADP + H(+). It functions in the pathway cofactor metabolism; pyridoxal 5'-phosphate salvage; pyridoxal 5'-phosphate from pyridoxal: step 1/1. Functionally, pyridoxal kinase involved in the salvage pathway of pyridoxal 5'-phosphate (PLP). Catalyzes the phosphorylation of pyridoxal to PLP. The protein is Pyridoxal kinase PdxY of Actinobacillus pleuropneumoniae serotype 5b (strain L20).